The primary structure comprises 429 residues: Arsenical pump membrane protein (429 aa).

10 consecutive transmembrane segments (helical) span residues 21–41 (GLGI…SGVV), 46–66 (IPVV…VIII), 98–118 (IVLL…ALIL), 121–141 (IVIA…AFVM), 178–198 (VMVP…HLFF), 228–248 (WIVL…GIPV), 249–269 (SAIA…GHAI), 274–294 (VLRG…LVVY), 316–336 (GLWA…SIMN), and 407–427 (IVMT…RLSF).

The protein resides in the cell inner membrane. Involved in arsenical resistance. Thought to form the channel of an arsenite pump. The protein is Arsenical pump membrane protein (arsB) of Escherichia coli.